We begin with the raw amino-acid sequence, 362 residues long: MLCVNVELRERSYPIHIGMGLLSEAQVYPLKKGDKVMIVTNPTIAQYYLSSVTDTLEKIGCSVENVQLPEGEQYKTLESLDLIFTALLKANHGRDTSIIALGGGVIGDIAGYAAASYQRGVRFIQIPTTLLAQVDSSVGGKTAVNHKLGKNMIGAFYQPCAVIIDTLTLTTLPKREIHAGLAEVIKYGAILDDEFFTWLEKHITNLVALEQQYLQQCIARCCQIKADVVTRDETEKGERALLNLGHTFGHAIETHLGYGNWLHGEAVATGMMIAAILSNKLGDLSLNDVTRLEKLLIQADLPTASPDTMKAEDYLPHMMRDKKVLAGKLRLVLLKSLGQAYVATDTDKEYVLDAIRTCSKKS.

Residues 70 to 75 (EGEQYK), 104 to 108 (GVIGD), 128 to 129 (TT), lysine 141, lysine 150, and 168 to 171 (TLTT) each bind NAD(+). Residues glutamate 183, histidine 246, and histidine 263 each coordinate Zn(2+).

The protein belongs to the sugar phosphate cyclases superfamily. Dehydroquinate synthase family. Co(2+) serves as cofactor. Requires Zn(2+) as cofactor. The cofactor is NAD(+).

It is found in the cytoplasm. The catalysed reaction is 7-phospho-2-dehydro-3-deoxy-D-arabino-heptonate = 3-dehydroquinate + phosphate. The protein operates within metabolic intermediate biosynthesis; chorismate biosynthesis; chorismate from D-erythrose 4-phosphate and phosphoenolpyruvate: step 2/7. Catalyzes the conversion of 3-deoxy-D-arabino-heptulosonate 7-phosphate (DAHP) to dehydroquinate (DHQ). The sequence is that of 3-dehydroquinate synthase from Histophilus somni (strain 129Pt) (Haemophilus somnus).